A 202-amino-acid polypeptide reads, in one-letter code: Protein phosphatase inhibitor 2 family member C (202 aa).

2 disordered regions span residues Met-1–Ser-51 and Pro-71–Ser-118. The interval Lys-12–Asn-17 is required for binding PPP1CC. A compositionally biased stretch (low complexity) spans Ser-19 to Thr-35. The tract at residues Lys-43–Ala-55 is required for binding PPP1CC. The segment covering Pro-71 to Asp-80 has biased composition (polar residues). The span at Asp-84 to Glu-112 shows a compositional bias: basic and acidic residues. The tract at residues His-144–Glu-147 is required for binding PPP1CC catalytic center, displacing metal ions and inhibition of PPP1CC catalytic activity. A disordered region spans residues Leu-162 to Pro-202.

This sequence belongs to the protein phosphatase inhibitor 2 family. In terms of tissue distribution, detected in sperm (at protein level).

Functionally, functions as a protein phosphatase inhibitor. It inhibits activity of the catalytic subunit of PP1 and weakly inhibits the activity of myosin-associated phosphates. This is Protein phosphatase inhibitor 2 family member C from Homo sapiens (Human).